Consider the following 201-residue polypeptide: Twin horsetail protein 2 (201 aa).

It localises to the nucleus. In terms of biological role, required for correct meiotic chromosome segregation and recombination. The chain is Twin horsetail protein 2 (tht2) from Schizosaccharomyces pombe (strain 972 / ATCC 24843) (Fission yeast).